The chain runs to 123 residues: Large ribosomal subunit protein uL24 (123 aa).

It belongs to the universal ribosomal protein uL24 family. In terms of assembly, part of the 50S ribosomal subunit.

One of two assembly initiator proteins, it binds directly to the 5'-end of the 23S rRNA, where it nucleates assembly of the 50S subunit. Its function is as follows. Located at the polypeptide exit tunnel on the outside of the subunit. In Pyrobaculum aerophilum (strain ATCC 51768 / DSM 7523 / JCM 9630 / CIP 104966 / NBRC 100827 / IM2), this protein is Large ribosomal subunit protein uL24.